Consider the following 695-residue polypeptide: MILKYNSSYRFYLSSSFLQAMEVDCRRYYVRLLQSCSSRNRETLWRQTNGLLLKKGFLSSIVIVANHLLQMYSRSGKMGIARNLFDEMPDRNYFSWNTMIEGYMNSGEKGTSLRFFDMMPERDGYSWNVVVSGFAKAGELSVARRLFNAMPEKDVVTLNSLLHGYILNGYAEEALRLFKELNFSADAITLTTVLKACAELEALKCGKQIHAQILIGGVECDSKMNSSLVNVYAKCGDLRMASYMLEQIREPDDHSLSALISGYANCGRVNESRGLFDRKSNRCVILWNSMISGYIANNMKMEALVLFNEMRNETREDSRTLAAVINACIGLGFLETGKQMHCHACKFGLIDDIVVASTLLDMYSKCGSPMEACKLFSEVESYDTILLNSMIKVYFSCGRIDDAKRVFERIENKSLISWNSMTNGFSQNGCTVETLEYFHQMHKLDLPTDEVSLSSVISACASISSLELGEQVFARATIVGLDSDQVVSSSLIDLYCKCGFVEHGRRVFDTMVKSDEVPWNSMISGYATNGQGFEAIDLFKKMSVAGIRPTQITFMVVLTACNYCGLVEEGRKLFESMKVDHGFVPDKEHFSCMVDLLARAGYVEEAINLVEEMPFDVDGSMWSSILRGCVANGYKAMGKKAAEKIIELEPENSVAYVQLSAIFATSGDWESSALVRKLMRENNVTKNPGSSWTDC.

The transit peptide at 1–64 (MILKYNSSYR…KGFLSSIVIV (64 aa)) directs the protein to the mitochondrion. PPR repeat units lie at residues 61 to 91 (IVIVANHLLQMYSRSGKMGIARNLFDEMPDR), 92 to 122 (NYFSWNTMIEGYMNSGEKGTSLRFFDMMPER), 123 to 157 (DGYSWNVVVSGFAKAGELSVARRLFNAMPEKDVVT), 159 to 184 (NSLLHGYILNGYAEEALRLFKELNFS), 186 to 220 (DAITLTTVLKACAELEALKCGKQIHAQILIGGVEC), 221 to 251 (DSKMNSSLVNVYAKCGDLRMASYMLEQIREP), 252 to 282 (DDHSLSALISGYANCGRVNESRGLFDRKSNR), 283 to 313 (CVILWNSMISGYIANNMKMEALVLFNEMRNE), 317 to 351 (DSRTLAAVINACIGLGFLETGKQMHCHACKFGLID), 352 to 382 (DIVVASTLLDMYSKCGSPMEACKLFSEVESY), 383 to 417 (DTILLNSMIKVYFSCGRIDDAKRVFERIENKSLIS), 418 to 448 (WNSMTNGFSQNGCTVETLEYFHQMHKLDLPT), 449 to 483 (DEVSLSSVISACASISSLELGEQVFARATIVGLDS), 484 to 514 (DQVVSSSLIDLYCKCGFVEHGRRVFDTMVKS), 515 to 549 (DEVPWNSMISGYATNGQGFEAIDLFKKMSVAGIRP), 550 to 585 (TQITFMVVLTACNYCGLVEEGRKLFESMKVDHGFVP), and 586 to 616 (DKEHFSCMVDLLARAGYVEEAINLVEEMPFD). Positions 621–695 (MWSSILRGCV…KNPGSSWTDC (75 aa)) are type E motif; degenerate.

This sequence belongs to the PPR family. PCMP-E subfamily.

The protein resides in the mitochondrion. This Arabidopsis thaliana (Mouse-ear cress) protein is Putative pentatricopeptide repeat-containing protein At1g77010, mitochondrial (PCMP-E5).